A 202-amino-acid polypeptide reads, in one-letter code: Lipoprotein signal peptidase (202 aa).

Residues 1 to 29 (MPDEPTGSADPLTSTEEAGGAGEPNAPAP) form a disordered region. 3 helical membrane-spanning segments follow: residues 35-55 (MLLSVAVVVLTLDIVTKVVAV), 88-108 (GYTWVLTLIATGVVVGIFWMG), and 112-132 (VSPWWALGLGMILGGAMGNLV). Active-site residues include aspartate 148 and aspartate 162. Residues 160–180 (VADPSVVGGAILLVILSIFGF) traverse the membrane as a helical segment.

The protein belongs to the peptidase A8 family.

The protein localises to the cell membrane. The catalysed reaction is Release of signal peptides from bacterial membrane prolipoproteins. Hydrolyzes -Xaa-Yaa-Zaa-|-(S,diacylglyceryl)Cys-, in which Xaa is hydrophobic (preferably Leu), and Yaa (Ala or Ser) and Zaa (Gly or Ala) have small, neutral side chains.. It participates in protein modification; lipoprotein biosynthesis (signal peptide cleavage). Functionally, this protein specifically catalyzes the removal of signal peptides from prolipoproteins. The protein is Lipoprotein signal peptidase of Mycobacterium bovis (strain ATCC BAA-935 / AF2122/97).